The chain runs to 294 residues: Flavin-dependent thymidylate synthase (294 aa).

The ThyX domain occupies 27-250 (GFIRVIDYMG…PFTYEAFEEY (224 aa)). FAD-binding positions include Thr-73, 96 to 98 (RHR), and Glu-104. DUMP is bound by residues 93-96 (QWIR), 104-108 (EYSAR), and Arg-189. Residues 96–106 (RHRTASVNEYS) carry the ThyX motif motif. FAD contacts are provided by residues 205–207 (NLH) and His-211. Residue Arg-216 coordinates dUMP. The Involved in ionization of N3 of dUMP, leading to its activation role is filled by Arg-216.

This sequence belongs to the thymidylate synthase ThyX family. Homotetramer. The cofactor is FAD.

It catalyses the reaction dUMP + (6R)-5,10-methylene-5,6,7,8-tetrahydrofolate + NADPH + H(+) = dTMP + (6S)-5,6,7,8-tetrahydrofolate + NADP(+). It participates in pyrimidine metabolism; dTTP biosynthesis. Functionally, catalyzes the reductive methylation of 2'-deoxyuridine-5'-monophosphate (dUMP) to 2'-deoxythymidine-5'-monophosphate (dTMP) while utilizing 5,10-methylenetetrahydrofolate (mTHF) as the methyl donor, and NADPH and FADH(2) as the reductant. In Rickettsia prowazekii (strain Madrid E), this protein is Flavin-dependent thymidylate synthase.